The following is a 1129-amino-acid chain: MCSPDPEDMHILTNDIPSFDKSLDPYGPEGHLALDIERFSSFMNKPDSRIMSKPVIVRGIPWRILAICRHQQNNRQVATSRSRNNYNFGFFLQCNNDDLLQKRGMWRCYGQATLEVLNANGPPIQKKIHHSFHNTEVDWGFSNYDQYDTLTSPKDGYVIDDVIRLRCRFTADVPTGANYMWDSKKHTGCIGLRNQGATCYMNSILQSFYFTTGFRRAVYNMEVGTEPNESNIVLAMQRVFYELQMSSEAVETNSLTRAFGWDKLDAFNQHDVQEFCRVLLDNLETKMKGTSEEKSIPNLFRGNMKSYIKCLDVDYESSRTESFYDVQLNVLGMDSLERAFDAYTTPETLDDDNKYDAGDHGLQRAEKGVKFVELPPVLHVQLMRFQYCGVEQKINERFSFPEKMNLSNCCELGPMLNEEDCVYSLHAVLVHSGEFHGGHYVTYINVNLHESAVDPTATAKWCKFDDDVVSRTTTDDAIVSNFGGEKAMNSSAYMLVYVRDNAIDQVLAPIPDTQIPQSVSRTFEMERMHRNREKKKQEEEQMCMSITLVTPDILATNHSFDLIEPVTITDVLPHETVYKHMVTAELYQFVQEKLFEKSTLPKVDMFDSDDETRMKRKEILRRLKTKKFGFRLWRMTDSYTVDKPQKMASRLRPSDFIEYSIDTRLDHTLSHDTETIYVEHSQFLQPLNEYLPTRDILFFLKYYDAITDKFTIIGHVTLDSHKRLNLYRMTFCDLLGLPKDTELKYYIEHAPNHVEQIDDPNRSTISRLVDDQDGAIVIVEKADPTAKKDAKTKMIELYNDVEFEFSQQFYSKMPNEEPFELFTKRFCLEQKLTDVTEFIGSELNVDPRNVMLWTRVSGSRFEPNFDDYAVTGIQCKYLTLRTLHDPRQHKKYSVSYAIFPFPVNEVHTTRMFVRLYRQMPNGNVEELNLFPPKDGTVTDLIAEAKRYYPSVEGGSGKFRLLQIGTSPLNNQRVFQIYNENTAIVDLDQRPVYKQQAQHTLNCRIEEIPHDELDVAQGEFFCPVVHYDREPTKLFGVSFVIKIRNGELMTDVRDRLRRKLPDVSDAEFAKYKFALLSRDKLCRNIEFNAGEKVNLMDMANQTTGVPQVYIGLDHKSPSQHSNEAAIRILN.

Residues 29 to 169 (EGHLALDIER…DDVIRLRCRF (141 aa)) form the MATH domain. Residues 190 to 500 (IGLRNQGATC…SAYMLVYVRD (311 aa)) form the USP domain. Cys-199 functions as the Nucleophile in the catalytic mechanism. The Proton acceptor role is filled by His-439.

The protein belongs to the peptidase C19 family.

It localises to the nucleus. It carries out the reaction Thiol-dependent hydrolysis of ester, thioester, amide, peptide and isopeptide bonds formed by the C-terminal Gly of ubiquitin (a 76-residue protein attached to proteins as an intracellular targeting signal).. Functionally, hydrolase that deubiquitinates target proteins. The protein is Ubiquitin carboxyl-terminal hydrolase 7 of Caenorhabditis briggsae.